Reading from the N-terminus, the 324-residue chain is Beta-ketoacyl-[acyl-carrier-protein] synthase III (324 aa).

Active-site residues include C112 and H249. Residues 250-254 form an ACP-binding region; that stretch reads QANIR. N279 is an active-site residue.

The protein belongs to the thiolase-like superfamily. FabH family. As to quaternary structure, homodimer.

The protein resides in the cytoplasm. The catalysed reaction is malonyl-[ACP] + acetyl-CoA + H(+) = 3-oxobutanoyl-[ACP] + CO2 + CoA. Its pathway is lipid metabolism; fatty acid biosynthesis. Functionally, catalyzes the condensation reaction of fatty acid synthesis by the addition to an acyl acceptor of two carbons from malonyl-ACP. Catalyzes the first condensation reaction which initiates fatty acid synthesis and may therefore play a role in governing the total rate of fatty acid production. Possesses both acetoacetyl-ACP synthase and acetyl transacylase activities. Its substrate specificity determines the biosynthesis of branched-chain and/or straight-chain of fatty acids. This is Beta-ketoacyl-[acyl-carrier-protein] synthase III from Streptococcus sanguinis (strain SK36).